The chain runs to 143 residues: Large-conductance mechanosensitive channel (143 aa).

Transmembrane regions (helical) follow at residues 10–30 (FAVKGNVMDLAVGVIIGGAFS) and 89–109 (GSFITVAINFVILAFIIFLMV).

The protein belongs to the MscL family. As to quaternary structure, homopentamer.

It is found in the cell inner membrane. Its function is as follows. Channel that opens in response to stretch forces in the membrane lipid bilayer. May participate in the regulation of osmotic pressure changes within the cell. In Burkholderia ambifaria (strain ATCC BAA-244 / DSM 16087 / CCUG 44356 / LMG 19182 / AMMD) (Burkholderia cepacia (strain AMMD)), this protein is Large-conductance mechanosensitive channel.